A 95-amino-acid chain; its full sequence is Co-chaperonin GroES (95 aa).

It belongs to the GroES chaperonin family. As to quaternary structure, heptamer of 7 subunits arranged in a ring. Interacts with the chaperonin GroEL.

It is found in the cytoplasm. In terms of biological role, together with the chaperonin GroEL, plays an essential role in assisting protein folding. The GroEL-GroES system forms a nano-cage that allows encapsulation of the non-native substrate proteins and provides a physical environment optimized to promote and accelerate protein folding. GroES binds to the apical surface of the GroEL ring, thereby capping the opening of the GroEL channel. This chain is Co-chaperonin GroES, found in Cereibacter sphaeroides (strain KD131 / KCTC 12085) (Rhodobacter sphaeroides).